Consider the following 292-residue polypeptide: Calcium-binding protein CBP (292 aa).

The tract at residues 1-80 (MAGYPPNPGS…YGSGGGYGAP (80 aa)) is disordered. A compositionally biased stretch (gly residues) spans 12–21 (YPYGGAGGYG). The span at 22-40 (APPPPYGSSPAPSAPPYGA) shows a compositional bias: pro residues. EF-hand domains lie at 121–156 (GTDP…YSQS) and 187–222 (YSLQ…LGYS). Positions 134, 136, 138, 140, 145, 200, 202, 204, 206, and 211 each coordinate Ca(2+).

Functionally, potential calcium sensor. The sequence is that of Calcium-binding protein CBP from Oryza sativa subsp. japonica (Rice).